The primary structure comprises 174 residues: Chorion protein S18 (174 aa).

An N-terminal signal peptide occupies residues 1–17; that stretch reads MMKFMCIFICAVAAVSA. Over residues 154 to 165 the composition is skewed to low complexity; that stretch reads AAAASSSVAGVA. The disordered stretch occupies residues 154 to 174; it reads AAAASSSVAGVAKKGYRKSSY.

This sequence belongs to the chorion protein S15/S18 family.

It localises to the secreted. Functionally, chorion membrane (egg shell) protein; plays a role in protecting the egg from the environment. In Drosophila subobscura (Fruit fly), this protein is Chorion protein S18 (Cp18).